A 172-amino-acid polypeptide reads, in one-letter code: Adenine phosphoribosyltransferase (172 aa).

The protein belongs to the purine/pyrimidine phosphoribosyltransferase family. As to quaternary structure, homodimer.

It localises to the cytoplasm. It carries out the reaction AMP + diphosphate = 5-phospho-alpha-D-ribose 1-diphosphate + adenine. It functions in the pathway purine metabolism; AMP biosynthesis via salvage pathway; AMP from adenine: step 1/1. In terms of biological role, catalyzes a salvage reaction resulting in the formation of AMP, that is energically less costly than de novo synthesis. This is Adenine phosphoribosyltransferase from Prochlorococcus marinus (strain SARG / CCMP1375 / SS120).